Consider the following 157-residue polypeptide: NADPH-dependent 7-cyano-7-deazaguanine reductase (157 aa).

C56 functions as the Thioimide intermediate in the catalytic mechanism. Catalysis depends on D63, which acts as the Proton donor. Substrate is bound by residues 78-80 (VES) and 97-98 (HE).

Belongs to the GTP cyclohydrolase I family. QueF type 1 subfamily.

The protein resides in the cytoplasm. It carries out the reaction 7-aminomethyl-7-carbaguanine + 2 NADP(+) = 7-cyano-7-deazaguanine + 2 NADPH + 3 H(+). It functions in the pathway tRNA modification; tRNA-queuosine biosynthesis. Its function is as follows. Catalyzes the NADPH-dependent reduction of 7-cyano-7-deazaguanine (preQ0) to 7-aminomethyl-7-deazaguanine (preQ1). This Parabacteroides distasonis (strain ATCC 8503 / DSM 20701 / CIP 104284 / JCM 5825 / NCTC 11152) protein is NADPH-dependent 7-cyano-7-deazaguanine reductase.